The sequence spans 444 residues: Ribosomal protein uS12 methylthiotransferase RimO (444 aa).

The MTTase N-terminal domain occupies 4–118 (IKYGVVSLGC…LSDAIKKSIE (115 aa)). [4Fe-4S] cluster contacts are provided by Cys13, Cys48, Cys81, Cys155, Cys159, and Cys162. The Radical SAM core domain occupies 141 to 373 (TTQKHYAYLR…MQRDIVKSIN (233 aa)). The TRAM domain maps to 374–440 (ADKVNKVYKV…EYDLIGVVCD (67 aa)).

It belongs to the methylthiotransferase family. RimO subfamily. [4Fe-4S] cluster serves as cofactor.

The protein localises to the cytoplasm. It catalyses the reaction L-aspartate(89)-[ribosomal protein uS12]-hydrogen + (sulfur carrier)-SH + AH2 + 2 S-adenosyl-L-methionine = 3-methylsulfanyl-L-aspartate(89)-[ribosomal protein uS12]-hydrogen + (sulfur carrier)-H + 5'-deoxyadenosine + L-methionine + A + S-adenosyl-L-homocysteine + 2 H(+). Its function is as follows. Catalyzes the methylthiolation of an aspartic acid residue of ribosomal protein uS12. The protein is Ribosomal protein uS12 methylthiotransferase RimO of Clostridium tetani (strain Massachusetts / E88).